A 278-amino-acid polypeptide reads, in one-letter code: MRQCQRSPIGIFDSGVGGLTVLRELYRRLPNESILYFADTARLPYGTRSAGEILQFVREIMDWMTSQQVKMVIMACNTSSALALEAIRDEFALPVLGVILPGARAAVQKGKRIGVIATPATAASNAYRQAIEEIDSTAQVWQVGCPDFVPLIEQNRLYEPYTKEVAKQYLNPLLQVNIDTLVYGCTHYRHLEPLFRQILPPSISLVDPAQYVVSAAEKELELLGLKSTLPCLPTRFCVSGNPETFANLSRQWLGYIPRVDKVYLPVKIRSSMSLEVLE.

Substrate contacts are provided by residues 13–14 (DS) and 45–46 (YG). Residue Cys76 is the Proton donor/acceptor of the active site. 77 to 78 (NT) is a binding site for substrate. Residue Cys185 is the Proton donor/acceptor of the active site. 186–187 (TH) contacts substrate.

Belongs to the aspartate/glutamate racemases family.

The enzyme catalyses L-glutamate = D-glutamate. Its pathway is cell wall biogenesis; peptidoglycan biosynthesis. Functionally, provides the (R)-glutamate required for cell wall biosynthesis. This Gloeothece citriformis (strain PCC 7424) (Cyanothece sp. (strain PCC 7424)) protein is Glutamate racemase.